A 296-amino-acid polypeptide reads, in one-letter code: Nitrogenase iron protein (296 aa).

Residue 11–18 coordinates ATP; sequence GKGGIGKS. C99 contributes to the [4Fe-4S] cluster binding site. The residue at position 102 (R102) is an ADP-ribosylarginine; by dinitrogenase reductase ADP-ribosyltransferase. C134 serves as a coordination point for [4Fe-4S] cluster.

Belongs to the NifH/BchL/ChlL family. In terms of assembly, homodimer. Requires [4Fe-4S] cluster as cofactor. The reversible ADP-ribosylation of Arg-102 inactivates the nitrogenase reductase and regulates nitrogenase activity.

It carries out the reaction N2 + 8 reduced [2Fe-2S]-[ferredoxin] + 16 ATP + 16 H2O = H2 + 8 oxidized [2Fe-2S]-[ferredoxin] + 2 NH4(+) + 16 ADP + 16 phosphate + 6 H(+). Functionally, the key enzymatic reactions in nitrogen fixation are catalyzed by the nitrogenase complex, which has 2 components: the iron protein and the molybdenum-iron protein. The polypeptide is Nitrogenase iron protein (Dechloromonas aromatica (strain RCB)).